We begin with the raw amino-acid sequence, 359 residues long: 5-amino-6-(D-ribitylamino)uracil--L-tyrosine 4-hydroxyphenyl transferase 1 (359 aa).

Residues 45 to 282 (VTYVVNANIN…VYAISRIFFK (238 aa)) form the Radical SAM core domain. C59, C63, and C66 together coordinate [4Fe-4S] cluster.

This sequence belongs to the radical SAM superfamily. CofH family. Consists of two subunits, CofG and CofH. Requires [4Fe-4S] cluster as cofactor.

The catalysed reaction is 5-amino-6-(D-ribitylamino)uracil + L-tyrosine + S-adenosyl-L-methionine = 5-amino-5-(4-hydroxybenzyl)-6-(D-ribitylimino)-5,6-dihydrouracil + 2-iminoacetate + 5'-deoxyadenosine + L-methionine + H(+). It functions in the pathway cofactor biosynthesis; coenzyme F0 biosynthesis. Catalyzes the radical-mediated synthesis of 5-amino-5-(4-hydroxybenzyl)-6-(D-ribitylimino)-5,6-dihydrouracil from 5-amino-6-(D-ribitylamino)uracil and L-tyrosine. The chain is 5-amino-6-(D-ribitylamino)uracil--L-tyrosine 4-hydroxyphenyl transferase 1 from Methanococcus maripaludis (strain DSM 14266 / JCM 13030 / NBRC 101832 / S2 / LL).